The primary structure comprises 680 residues: Putative cyclin-dependent serine/threonine-protein kinase DDB_G0272797/DDB_G0274007 (680 aa).

In terms of domain architecture, Protein kinase spans 4-381; that stretch reads YIILSKCGQG…SLEALEHPWF (378 aa). Residues 10-18 and lysine 33 contribute to the ATP site; that span reads CGQGTYGSV. Residue aspartate 125 is the Proton acceptor of the active site. 4 disordered regions span residues 243–299, 409–444, 483–507, and 597–680; these read QQQQ…LQSP, RQLQ…QRQH, LAQH…QHQQ, and QQQQ…KSNG. Over residues 257–286 the composition is skewed to low complexity; the sequence is NNNNNNNNNNNNNNNNNNNNNNNNNNNNNN. Residues 287 to 297 show a composition bias toward polar residues; it reads KYNNISTSCLQ. 3 stretches are compositionally biased toward low complexity: residues 410–444, 483–494, and 597–616; these read QLQQ…QRQH, LAQHQQYNSQQH, and QQQQ…PPQH. The span at 617–631 shows a compositional bias: basic residues; that stretch reads QHQHQHQHQHQHQHQ. The span at 632–642 shows a compositional bias: low complexity; it reads HQPQPQHQHQP. Pro residues predominate over residues 643 to 655; that stretch reads QPQPQPTPTPTPT. A compositionally biased stretch (low complexity) spans 656-680; it reads STPTTTTIPPTITTTIQPTISKSNG.

It belongs to the protein kinase superfamily. CMGC Ser/Thr protein kinase family. CDC2/CDKX subfamily.

The enzyme catalyses L-seryl-[protein] + ATP = O-phospho-L-seryl-[protein] + ADP + H(+). It catalyses the reaction L-threonyl-[protein] + ATP = O-phospho-L-threonyl-[protein] + ADP + H(+). This is Putative cyclin-dependent serine/threonine-protein kinase DDB_G0272797/DDB_G0274007 from Dictyostelium discoideum (Social amoeba).